A 356-amino-acid chain; its full sequence is Nuclear hormone receptor family member nhr-42 (356 aa).

Positions 7 to 82 (SQTCLICGDS…VGMRESAVLS (76 aa)) form a DNA-binding region, nuclear receptor. The NR C4-type zinc-finger motif lies at 10 to 30 (CLICGDSADSLHFGALSCRAC). The NR C4-type; atypical zinc finger occupies 48-70 (CDRQCKVDTGMRKLCASCRYDKC). The NR LBD domain occupies 108-356 (TSDSVLENLQ…HSSIFGNMAE (249 aa)).

The protein belongs to the nuclear hormone receptor family.

It localises to the nucleus. In terms of biological role, orphan nuclear receptor. This is Nuclear hormone receptor family member nhr-42 (nhr-42) from Caenorhabditis elegans.